A 545-amino-acid polypeptide reads, in one-letter code: Chaperonin GroEL 2 (545 aa).

ATP is bound by residues 29 to 32 (TLGP), 86 to 90 (DGTTT), glycine 413, 479 to 481 (NAA), and aspartate 495.

It belongs to the chaperonin (HSP60) family. Forms a cylinder of 14 subunits composed of two heptameric rings stacked back-to-back. Interacts with the co-chaperonin GroES.

It is found in the cytoplasm. The enzyme catalyses ATP + H2O + a folded polypeptide = ADP + phosphate + an unfolded polypeptide.. Together with its co-chaperonin GroES, plays an essential role in assisting protein folding. The GroEL-GroES system forms a nano-cage that allows encapsulation of the non-native substrate proteins and provides a physical environment optimized to promote and accelerate protein folding. This chain is Chaperonin GroEL 2, found in Prochlorococcus marinus (strain MIT 9312).